The following is a 446-amino-acid chain: Adenylosuccinate synthetase (446 aa).

GTP contacts are provided by residues 21–27 and 49–51; these read GDEGKGK and GHT. Catalysis depends on aspartate 22, which acts as the Proton acceptor. 2 residues coordinate Mg(2+): aspartate 22 and glycine 49. Residues 22–25, 47–50, threonine 141, arginine 155, glutamine 236, threonine 251, and arginine 319 contribute to the IMP site; these read DEGK and NAGH. Histidine 50 (proton donor) is an active-site residue. 315-321 contacts substrate; sequence VTTGRSR. Residues arginine 321, 347–349, and 429–431 each bind GTP; these read KLD and STS.

It belongs to the adenylosuccinate synthetase family. Homodimer. Mg(2+) is required as a cofactor.

It localises to the cytoplasm. The catalysed reaction is IMP + L-aspartate + GTP = N(6)-(1,2-dicarboxyethyl)-AMP + GDP + phosphate + 2 H(+). It participates in purine metabolism; AMP biosynthesis via de novo pathway; AMP from IMP: step 1/2. Plays an important role in the de novo pathway of purine nucleotide biosynthesis. Catalyzes the first committed step in the biosynthesis of AMP from IMP. The chain is Adenylosuccinate synthetase from Polaromonas sp. (strain JS666 / ATCC BAA-500).